We begin with the raw amino-acid sequence, 301 residues long: RNA polymerase II holoenzyme cyclin-like subunit (301 aa).

Residues 53–142 enclose the Cyclin N-terminal domain; that stretch reads QQLIKLGKRT…LGECEFALIS (90 aa).

The protein belongs to the cyclin family. Cyclin C subfamily. As to quaternary structure, component of the srb8-11 complex, a regulatory module of the Mediator complex.

It is found in the nucleus. Component of the srb8-11 complex. The srb8-11 complex is a regulatory module of the Mediator complex which is itself involved in regulation of basal and activated RNA polymerase II-dependent transcription. The srb8-11 complex may be involved in the transcriptional repression of a subset of genes regulated by Mediator. It may inhibit the association of the Mediator complex with RNA polymerase II to form the holoenzyme complex. The srb8-11 complex phosphorylates the C-terminal domain (CTD) of the largest subunit of RNA polymerase II. This chain is RNA polymerase II holoenzyme cyclin-like subunit (ssn8), found in Aspergillus terreus (strain NIH 2624 / FGSC A1156).